A 355-amino-acid chain; its full sequence is Zinc finger protein CONSTANS-LIKE 5 (355 aa).

Positions 22, 25, 45, 50, 61, 64, 84, and 89 each coordinate Zn(2+). The segment at 22–60 (CDACKSVTAAVFCRVDSAFLCIACDTRIHSFTRHERVWV) adopts a B box-type 1; atypical zinc-finger fold. The segment at 61-103 (CEVCEQAPAAVTCKADAAALCVSCDADIHSANPLASRHERVPV) adopts a B box-type 2; atypical zinc-finger fold. Residues 285-327 (REARVLRYREKRKNRKFEKTIRYASRKAYAESRPRIKGRFAKR) enclose the CCT domain.

The protein belongs to the CONSTANS family.

The protein localises to the nucleus. This Arabidopsis thaliana (Mouse-ear cress) protein is Zinc finger protein CONSTANS-LIKE 5 (COL5).